Reading from the N-terminus, the 188-residue chain is UPF0301 protein azo3459 (188 aa).

This sequence belongs to the UPF0301 (AlgH) family.

In Azoarcus sp. (strain BH72), this protein is UPF0301 protein azo3459.